A 334-amino-acid polypeptide reads, in one-letter code: tRNA N6-adenosine threonylcarbamoyltransferase (334 aa).

Fe cation-binding residues include H111 and H115. Residues 134–138 (IVSGG), D167, G180, D184, and N272 each bind substrate. D300 is a binding site for Fe cation.

Belongs to the KAE1 / TsaD family. Fe(2+) is required as a cofactor.

It localises to the cytoplasm. The enzyme catalyses L-threonylcarbamoyladenylate + adenosine(37) in tRNA = N(6)-L-threonylcarbamoyladenosine(37) in tRNA + AMP + H(+). Its function is as follows. Required for the formation of a threonylcarbamoyl group on adenosine at position 37 (t(6)A37) in tRNAs that read codons beginning with adenine. Is involved in the transfer of the threonylcarbamoyl moiety of threonylcarbamoyl-AMP (TC-AMP) to the N6 group of A37, together with TsaE and TsaB. TsaD likely plays a direct catalytic role in this reaction. In Dictyoglomus turgidum (strain DSM 6724 / Z-1310), this protein is tRNA N6-adenosine threonylcarbamoyltransferase.